A 419-amino-acid polypeptide reads, in one-letter code: 26S proteasome regulatory subunit 8 homolog A (419 aa).

An N-acetylalanine modification is found at alanine 2. 202–209 (GPPGTGKT) is an ATP binding site. A Glycyl lysine isopeptide (Lys-Gly) (interchain with G-Cter in ubiquitin) cross-link involves residue lysine 406.

The protein belongs to the AAA ATPase family. Component of the 19S regulatory particle (RP/PA700) base subcomplex of the 26S proteasome. The 26S proteasome is composed of a core protease (CP), known as the 20S proteasome, capped at one or both ends by the 19S regulatory particle (RP/PA700). The RP/PA700 complex is composed of at least 17 different subunits in two subcomplexes, the base and the lid, which form the portions proximal and distal to the 20S proteolytic core, respectively.

The protein localises to the cytoplasm. It localises to the nucleus. Its function is as follows. The 26S proteasome is involved in the ATP-dependent degradation of ubiquitinated proteins. The regulatory (or ATPase) complex confers ATP dependency and substrate specificity to the 26S complex. The chain is 26S proteasome regulatory subunit 8 homolog A (RPT6A) from Arabidopsis thaliana (Mouse-ear cress).